The primary structure comprises 428 residues: 3-phosphoshikimate 1-carboxyvinyltransferase (428 aa).

Residues lysine 22, serine 23, and arginine 27 each coordinate 3-phosphoshikimate. Phosphoenolpyruvate is bound at residue lysine 22. Residues glycine 96 and arginine 124 each coordinate phosphoenolpyruvate. Residues serine 169, serine 170, glutamine 171, serine 197, aspartate 313, asparagine 336, and lysine 340 each coordinate 3-phosphoshikimate. Glutamine 171 is a binding site for phosphoenolpyruvate. Catalysis depends on aspartate 313, which acts as the Proton acceptor. Arginine 344, arginine 386, and lysine 411 together coordinate phosphoenolpyruvate.

This sequence belongs to the EPSP synthase family. In terms of assembly, monomer.

It localises to the cytoplasm. The catalysed reaction is 3-phosphoshikimate + phosphoenolpyruvate = 5-O-(1-carboxyvinyl)-3-phosphoshikimate + phosphate. Its pathway is metabolic intermediate biosynthesis; chorismate biosynthesis; chorismate from D-erythrose 4-phosphate and phosphoenolpyruvate: step 6/7. In terms of biological role, catalyzes the transfer of the enolpyruvyl moiety of phosphoenolpyruvate (PEP) to the 5-hydroxyl of shikimate-3-phosphate (S3P) to produce enolpyruvyl shikimate-3-phosphate and inorganic phosphate. The chain is 3-phosphoshikimate 1-carboxyvinyltransferase from Proteus mirabilis (strain HI4320).